A 72-amino-acid chain; its full sequence is Cytochrome b-c1 complex subunit 8 (72 aa).

Residues 2–41 lie on the Mitochondrial matrix side of the membrane; the sequence is GKQPVKLKAVVYAISPFQQKIMPGLWKDLPGKIHHKVSEN. Residues 42–59 traverse the membrane as a helical segment; that stretch reads WISATLLLGPLVGTYSYV. Residues 60–72 lie on the Mitochondrial intermembrane side of the membrane; sequence QHFLEKEKLEHRY.

Belongs to the UQCRQ/QCR8 family. In terms of assembly, component of the ubiquinol-cytochrome c oxidoreductase (cytochrome b-c1 complex, complex III, CIII), a multisubunit enzyme composed of 3 respiratory subunits cytochrome b, cytochrome c1 and Rieske protein, 2 core protein subunits, and additional low-molecular weight protein subunits. The complex exists as an obligatory dimer and forms supercomplexes (SCs) in the inner mitochondrial membrane with cytochrome c oxidase (complex IV, CIV).

Its subcellular location is the mitochondrion inner membrane. Its function is as follows. Component of the ubiquinol-cytochrome c oxidoreductase, a multisubunit transmembrane complex that is part of the mitochondrial electron transport chain which drives oxidative phosphorylation. The respiratory chain contains 3 multisubunit complexes succinate dehydrogenase (complex II, CII), ubiquinol-cytochrome c oxidoreductase (cytochrome b-c1 complex, complex III, CIII) and cytochrome c oxidase (complex IV, CIV), that cooperate to transfer electrons derived from NADH and succinate to molecular oxygen, creating an electrochemical gradient over the inner membrane that drives transmembrane transport and the ATP synthase. The cytochrome b-c1 complex catalyzes electron transfer from ubiquinol to cytochrome c, linking this redox reaction to translocation of protons across the mitochondrial inner membrane, with protons being carried across the membrane as hydrogens on the quinol. In the process called Q cycle, 2 protons are consumed from the matrix, 4 protons are released into the intermembrane space and 2 electrons are passed to cytochrome c. The protein is Cytochrome b-c1 complex subunit 8 of Solanum tuberosum (Potato).